A 669-amino-acid chain; its full sequence is Major S-layer protein (669 aa).

Residues 1–24 (MKRFAAVSLAALMLLTVFASAASA) form the signal peptide. Residues Asn36, Asn70, Asn116, Asn600, and Asn607 are each glycosylated (N-linked (GlcNAc...) asparagine). Residues 588-648 (DGEVVDDDED…PTEADGTTPG (61 aa)) are disordered. Residues 590–627 (EVVDDDEDDDNVTEPVDNDTEVEEPTEEPTEGPTEEPT) show a composition bias toward acidic residues. Residues 645–665 (TTPGFGVVLGLVGLLAVVYLV) traverse the membrane as a helical segment.

This sequence belongs to the Methanosarcinales S-layer protein family. In terms of processing, glycosylated.

The protein localises to the secreted. It is found in the cell wall. Its subcellular location is the S-layer. The protein resides in the cell membrane. S-layer protein. The S-layer is a paracrystalline mono-layered assembly of proteins which coat the surface of the cell. This chain is Major S-layer protein, found in Methanosarcina mazei (strain ATCC BAA-159 / DSM 3647 / Goe1 / Go1 / JCM 11833 / OCM 88) (Methanosarcina frisia).